The sequence spans 563 residues: Arginine--tRNA ligase (563 aa).

The 'HIGH' region signature appears at 120–130 (PNIAKPFHIGH).

This sequence belongs to the class-I aminoacyl-tRNA synthetase family. Monomer.

It is found in the cytoplasm. The enzyme catalyses tRNA(Arg) + L-arginine + ATP = L-arginyl-tRNA(Arg) + AMP + diphosphate. In Clostridium botulinum (strain ATCC 19397 / Type A), this protein is Arginine--tRNA ligase.